The primary structure comprises 404 residues: Cysteine desulfurase IscS (404 aa).

Pyridoxal 5'-phosphate contacts are provided by residues A75 to T76, N155, Q183, and S203 to H205. K206 bears the N6-(pyridoxal phosphate)lysine mark. A pyridoxal 5'-phosphate-binding site is contributed by T243. C328 acts as the Cysteine persulfide intermediate in catalysis. C328 contributes to the [2Fe-2S] cluster binding site.

This sequence belongs to the class-V pyridoxal-phosphate-dependent aminotransferase family. NifS/IscS subfamily. In terms of assembly, homodimer. Forms a heterotetramer with IscU, interacts with other sulfur acceptors. The cofactor is pyridoxal 5'-phosphate.

It is found in the cytoplasm. It carries out the reaction (sulfur carrier)-H + L-cysteine = (sulfur carrier)-SH + L-alanine. It functions in the pathway cofactor biosynthesis; iron-sulfur cluster biosynthesis. Functionally, master enzyme that delivers sulfur to a number of partners involved in Fe-S cluster assembly, tRNA modification or cofactor biosynthesis. Catalyzes the removal of elemental sulfur atoms from cysteine to produce alanine. Functions as a sulfur delivery protein for Fe-S cluster synthesis onto IscU, an Fe-S scaffold assembly protein, as well as other S acceptor proteins. The protein is Cysteine desulfurase IscS of Shewanella oneidensis (strain ATCC 700550 / JCM 31522 / CIP 106686 / LMG 19005 / NCIMB 14063 / MR-1).